The primary structure comprises 333 residues: Large ribosomal subunit protein mL39 (333 aa).

The 67-residue stretch at 56–122 (DKIEVRYLGL…QESCTLQLLN (67 aa)) folds into the TGS domain. The tract at residues 311–333 (SKKPSPARLPNEPFEEQQQLQLS) is disordered.

It belongs to the mitochondrion-specific ribosomal protein mL39 family. As to quaternary structure, component of the mitochondrial ribosome large subunit (39S) which comprises a 16S rRNA and about 50 distinct proteins.

The protein localises to the mitochondrion. The polypeptide is Large ribosomal subunit protein mL39 (mRpL39) (Drosophila melanogaster (Fruit fly)).